The sequence spans 429 residues: UDP-N-acetylglucosamine 1-carboxyvinyltransferase (429 aa).

22 to 23 (KN) is a binding site for phosphoenolpyruvate. Arg96 contacts UDP-N-acetyl-alpha-D-glucosamine. The Proton donor role is filled by Cys120. Cys120 bears the 2-(S-cysteinyl)pyruvic acid O-phosphothioketal mark. UDP-N-acetyl-alpha-D-glucosamine is bound by residues 125–129 (RPVDL), Asp310, and Ile332.

Belongs to the EPSP synthase family. MurA subfamily.

It is found in the cytoplasm. The enzyme catalyses phosphoenolpyruvate + UDP-N-acetyl-alpha-D-glucosamine = UDP-N-acetyl-3-O-(1-carboxyvinyl)-alpha-D-glucosamine + phosphate. It participates in cell wall biogenesis; peptidoglycan biosynthesis. In terms of biological role, cell wall formation. Adds enolpyruvyl to UDP-N-acetylglucosamine. This Caulobacter vibrioides (strain ATCC 19089 / CIP 103742 / CB 15) (Caulobacter crescentus) protein is UDP-N-acetylglucosamine 1-carboxyvinyltransferase.